The sequence spans 377 residues: DNA-directed RNA polymerase subunit alpha (377 aa).

The tract at residues 1 to 259 (MSDSSHNLLY…KHFSVFEKMD (259 aa)) is alpha N-terminal domain (alpha-NTD). The interval 279-377 (ILHKLVLGIN…KIRSSKNTKG (99 aa)) is alpha C-terminal domain (alpha-CTD).

This sequence belongs to the RNA polymerase alpha chain family. Homodimer. The RNAP catalytic core consists of 2 alpha, 1 beta, 1 beta' and 1 omega subunit. When a sigma factor is associated with the core the holoenzyme is formed, which can initiate transcription.

The catalysed reaction is RNA(n) + a ribonucleoside 5'-triphosphate = RNA(n+1) + diphosphate. DNA-dependent RNA polymerase catalyzes the transcription of DNA into RNA using the four ribonucleoside triphosphates as substrates. The chain is DNA-directed RNA polymerase subunit alpha from Chlamydia trachomatis serovar L2 (strain ATCC VR-902B / DSM 19102 / 434/Bu).